The sequence spans 707 residues: Casein kinase 1-like protein HD16 (707 aa).

The interval Tyr19–Gly67 is disordered. A compositionally biased stretch (low complexity) spans Ala24–Gly37. The Protein kinase domain occupies Tyr147–Ile425. ATP is bound by residues Leu153–Val161 and Lys184. Asp276 (proton acceptor) is an active-site residue.

The protein belongs to the protein kinase superfamily. CK1 Ser/Thr protein kinase family. Casein kinase I subfamily. As to quaternary structure, monomer. Interacts with GHD7 (via C-terminus). Interacts with SLR1. Post-translationally, autophosphorylated. As to expression, expressed in roots, leaves and stems. Expressed in leaf vascular bundles, and proximal regions of the shoot and roots.

The protein localises to the cytoplasm. The protein resides in the nucleus. It carries out the reaction L-seryl-[protein] + ATP = O-phospho-L-seryl-[protein] + ADP + H(+). It catalyses the reaction L-threonyl-[protein] + ATP = O-phospho-L-threonyl-[protein] + ADP + H(+). In terms of biological role, casein kinases are operationally defined by their preferential utilization of acidic proteins such as caseins as substrates. It can phosphorylate a large number of proteins. Can phosphorylate casein on threonine residues in vitro. Involved in the regulation of flowering time through gibberellin (GA) signaling, and independently of photoperiod. Phosphorylates the DELLA protein SLR1, stabilizing SLR1 protein and sustaining SLR1 activity as repressor of GA signaling. Required for normal development of male floral organs and grains, through modulation of GA signaling. Targeted and repressed by the homeobox protein HAZ1 during GA signaling. Can phosphorylate phosvitin and SLR1 in vitro. Is not required for clock function in either the presence or the absence of light signals. Involved in a genetic control pathway for photoperiodic flowering under long day (LD) conditions that includes HD1, GHD7, HD5 and HD2. Phosphorylates and activates GHD7, a major floral repressor under LD conditions. Phosphorylation of GHD7 enhances its function in the repression of EHD1, HD3A and HD3B/RFT1, and obviously delaying flowering. The polypeptide is Casein kinase 1-like protein HD16 (Oryza sativa subsp. japonica (Rice)).